Consider the following 439-residue polypeptide: Phenylacetate-coenzyme A ligase (439 aa).

The protein belongs to the phenylacetyl-CoA ligase family. In terms of assembly, monomer.

It carries out the reaction 2-phenylacetate + ATP + CoA = phenylacetyl-CoA + AMP + diphosphate. The protein operates within aromatic compound metabolism; phenylacetate degradation. With respect to regulation, inhibited by divalent cations (zinc, copper, mercury) and by the sulfhydryl reagents 5,5-dithiobis(2-nitrobenzoic acid), N-ethylmaleimide and p-chloromercuribenzoate. Catalyzes the activation of phenylacetic acid (PA) to phenylacetyl-CoA (PA-CoA). Involved in the phenylalanine metabolism. Can also use CTP and UTP as substrate. This chain is Phenylacetate-coenzyme A ligase (paaK), found in Pseudomonas putida (Arthrobacter siderocapsulatus).